We begin with the raw amino-acid sequence, 34 residues long: Photosystem II reaction center protein M (34 aa).

Residues 7 to 27 form a helical membrane-spanning segment; that stretch reads GFVASLMFILVPAIFLIVLYI.

The protein belongs to the PsbM family. PSII is composed of 1 copy each of membrane proteins PsbA, PsbB, PsbC, PsbD, PsbE, PsbF, PsbH, PsbI, PsbJ, PsbK, PsbL, PsbM, PsbT, PsbX, PsbY, PsbZ, Psb30/Ycf12, peripheral proteins PsbO, CyanoQ (PsbQ), PsbU, PsbV and a large number of cofactors. It forms dimeric complexes.

The protein resides in the cellular thylakoid membrane. Functionally, one of the components of the core complex of photosystem II (PSII). PSII is a light-driven water:plastoquinone oxidoreductase that uses light energy to abstract electrons from H(2)O, generating O(2) and a proton gradient subsequently used for ATP formation. It consists of a core antenna complex that captures photons, and an electron transfer chain that converts photonic excitation into a charge separation. This subunit is found at the monomer-monomer interface. This chain is Photosystem II reaction center protein M, found in Synechococcus sp. (strain CC9902).